Reading from the N-terminus, the 218-residue chain is Pyrrolidone-carboxylate peptidase (218 aa).

Residues E81, C144, and H169 contribute to the active site.

The protein belongs to the peptidase C15 family. In terms of assembly, homotetramer.

It localises to the cytoplasm. The catalysed reaction is Release of an N-terminal pyroglutamyl group from a polypeptide, the second amino acid generally not being Pro.. In terms of biological role, removes 5-oxoproline from various penultimate amino acid residues except L-proline. This is Pyrrolidone-carboxylate peptidase (pcp) from Deinococcus radiodurans (strain ATCC 13939 / DSM 20539 / JCM 16871 / CCUG 27074 / LMG 4051 / NBRC 15346 / NCIMB 9279 / VKM B-1422 / R1).